A 509-amino-acid chain; its full sequence is Histidine--tRNA ligase (509 aa).

The protein belongs to the class-II aminoacyl-tRNA synthetase family. Homodimer.

The protein resides in the cytoplasm. It catalyses the reaction tRNA(His) + L-histidine + ATP = L-histidyl-tRNA(His) + AMP + diphosphate + H(+). The polypeptide is Histidine--tRNA ligase (Rhodopseudomonas palustris (strain TIE-1)).